We begin with the raw amino-acid sequence, 214 residues long: Uridine kinase (214 aa).

Position 15-22 (G15–S22) interacts with ATP.

It belongs to the uridine kinase family.

It localises to the cytoplasm. The catalysed reaction is uridine + ATP = UMP + ADP + H(+). The enzyme catalyses cytidine + ATP = CMP + ADP + H(+). It participates in pyrimidine metabolism; CTP biosynthesis via salvage pathway; CTP from cytidine: step 1/3. The protein operates within pyrimidine metabolism; UMP biosynthesis via salvage pathway; UMP from uridine: step 1/1. The protein is Uridine kinase of Aeromonas hydrophila subsp. hydrophila (strain ATCC 7966 / DSM 30187 / BCRC 13018 / CCUG 14551 / JCM 1027 / KCTC 2358 / NCIMB 9240 / NCTC 8049).